A 427-amino-acid polypeptide reads, in one-letter code: Glycophorin-binding protein-related antigen (427 aa).

8 GBP repeats span residues 109–149 (LTSA…DELE), 150–189 (TSAD…DEVE), 190–229 (SSAD…DELE), 230–269 (TSAD…EVET), 270–307 (SADP…SEVE), 308–347 (TSAD…DELE), 348–387 (TSAD…DELE), and 388–427 (TSAD…DESS).

The polypeptide is Glycophorin-binding protein-related antigen (GBPH) (Plasmodium falciparum (isolate FCBR / Columbia)).